A 108-amino-acid chain; its full sequence is Integration host factor subunit alpha (108 aa).

Belongs to the bacterial histone-like protein family. As to quaternary structure, heterodimer of an alpha and a beta chain.

In terms of biological role, this protein is one of the two subunits of integration host factor, a specific DNA-binding protein that functions in genetic recombination as well as in transcriptional and translational control. The sequence is that of Integration host factor subunit alpha from Rhodopseudomonas palustris (strain BisB18).